The sequence spans 514 residues: Double-stranded RNA-binding protein 6 (514 aa).

DRBM domains follow at residues 1–70 (MYKN…ALAR) and 87–155 (VYKN…SLRQ). 2 disordered regions span residues 195 to 268 (NNPH…SRFP) and 455 to 496 (EASQ…KDDH). Composition is skewed to polar residues over residues 216–225 (FPQSSHSSYS), 249–263 (AASQ…SPNP), and 473–484 (SPDSLPKTQLKT).

Functionally, binds double-stranded RNA. The chain is Double-stranded RNA-binding protein 6 (DRB6) from Oryza sativa subsp. japonica (Rice).